The primary structure comprises 182 residues: Adenine phosphoribosyltransferase (182 aa).

Belongs to the purine/pyrimidine phosphoribosyltransferase family. As to quaternary structure, homodimer.

The protein resides in the cytoplasm. It carries out the reaction AMP + diphosphate = 5-phospho-alpha-D-ribose 1-diphosphate + adenine. It functions in the pathway purine metabolism; AMP biosynthesis via salvage pathway; AMP from adenine: step 1/1. Functionally, catalyzes a salvage reaction resulting in the formation of AMP, that is energically less costly than de novo synthesis. The chain is Adenine phosphoribosyltransferase from Ectopseudomonas mendocina (strain ymp) (Pseudomonas mendocina).